Here is a 365-residue protein sequence, read N- to C-terminus: UPF0283 membrane protein Avi_2471 (365 aa).

Over residues 1-10 (MSKAPEDQRP) the composition is skewed to basic and acidic residues. Residues 1–47 (MSKAPEDQRPMPRRPAAFSLEEPSSSPARPPFAEAQEPQRRAPKSFD) form a disordered region. Helical transmembrane passes span 83–103 (FGKL…GLWI) and 117–137 (LGYT…VVVI).

It belongs to the UPF0283 family.

The protein resides in the cell inner membrane. This chain is UPF0283 membrane protein Avi_2471, found in Allorhizobium ampelinum (strain ATCC BAA-846 / DSM 112012 / S4) (Agrobacterium vitis (strain S4)).